The following is a 95-amino-acid chain: Large ribosomal subunit protein uL23 (95 aa).

The protein belongs to the universal ribosomal protein uL23 family. Part of the 50S ribosomal subunit. Contacts protein L29, and trigger factor when it is bound to the ribosome.

Functionally, one of the early assembly proteins it binds 23S rRNA. One of the proteins that surrounds the polypeptide exit tunnel on the outside of the ribosome. Forms the main docking site for trigger factor binding to the ribosome. The protein is Large ribosomal subunit protein uL23 of Deinococcus deserti (strain DSM 17065 / CIP 109153 / LMG 22923 / VCD115).